Here is a 252-residue protein sequence, read N- to C-terminus: Imidazole glycerol phosphate synthase subunit HisF (252 aa).

Residues Asp-13 and Asp-132 contribute to the active site.

The protein belongs to the HisA/HisF family. Heterodimer of HisH and HisF.

It localises to the cytoplasm. The catalysed reaction is 5-[(5-phospho-1-deoxy-D-ribulos-1-ylimino)methylamino]-1-(5-phospho-beta-D-ribosyl)imidazole-4-carboxamide + L-glutamine = D-erythro-1-(imidazol-4-yl)glycerol 3-phosphate + 5-amino-1-(5-phospho-beta-D-ribosyl)imidazole-4-carboxamide + L-glutamate + H(+). The protein operates within amino-acid biosynthesis; L-histidine biosynthesis; L-histidine from 5-phospho-alpha-D-ribose 1-diphosphate: step 5/9. Its function is as follows. IGPS catalyzes the conversion of PRFAR and glutamine to IGP, AICAR and glutamate. The HisF subunit catalyzes the cyclization activity that produces IGP and AICAR from PRFAR using the ammonia provided by the HisH subunit. This is Imidazole glycerol phosphate synthase subunit HisF from Campylobacter fetus subsp. fetus (strain 82-40).